We begin with the raw amino-acid sequence, 368 residues long: Branched-chain-amino-acid aminotransferase (368 aa).

R101 lines the pyridoxal 5'-phosphate pocket. An N6-(pyridoxal phosphate)lysine modification is found at K204. Pyridoxal 5'-phosphate is bound by residues Y209, 271–272, and T314; that span reads IT.

Belongs to the class-IV pyridoxal-phosphate-dependent aminotransferase family. In terms of assembly, homodimer. The cofactor is pyridoxal 5'-phosphate.

It catalyses the reaction L-leucine + 2-oxoglutarate = 4-methyl-2-oxopentanoate + L-glutamate. It carries out the reaction L-isoleucine + 2-oxoglutarate = (S)-3-methyl-2-oxopentanoate + L-glutamate. The enzyme catalyses L-valine + 2-oxoglutarate = 3-methyl-2-oxobutanoate + L-glutamate. It participates in amino-acid biosynthesis; L-isoleucine biosynthesis; L-isoleucine from 2-oxobutanoate: step 4/4. The protein operates within amino-acid biosynthesis; L-leucine biosynthesis; L-leucine from 3-methyl-2-oxobutanoate: step 4/4. Its pathway is amino-acid biosynthesis; L-valine biosynthesis; L-valine from pyruvate: step 4/4. Functionally, catalyzes the reversible transfers of an amino group from glutamate to the alpha-ketoacid of the respective amino acid in the final step in the biosynthesis of branchedchain amino acids. This is Branched-chain-amino-acid aminotransferase (ilvE) from Mycobacterium tuberculosis (strain CDC 1551 / Oshkosh).